The chain runs to 932 residues: DNA mismatch repair protein MutS (932 aa).

Position 615-622 (615-622 (GPNMAGKS)) interacts with ATP.

It belongs to the DNA mismatch repair MutS family.

Its function is as follows. This protein is involved in the repair of mismatches in DNA. It is possible that it carries out the mismatch recognition step. This protein has a weak ATPase activity. This chain is DNA mismatch repair protein MutS, found in Clostridium botulinum (strain Kyoto / Type A2).